We begin with the raw amino-acid sequence, 41 residues long: Large ribosomal subunit protein bL36 (41 aa).

This sequence belongs to the bacterial ribosomal protein bL36 family.

The polypeptide is Large ribosomal subunit protein bL36 (Novosphingobium aromaticivorans (strain ATCC 700278 / DSM 12444 / CCUG 56034 / CIP 105152 / NBRC 16084 / F199)).